Here is a 53-residue protein sequence, read N- to C-terminus: Non-classical export protein 1 (53 aa).

The chain crosses the membrane as a helical span at residues 7 to 29 (FLLGKFSDPLLAIMVGCLSYYVY).

Belongs to the NCE101 family.

It localises to the membrane. Involved in a novel pathway of export of proteins that lack a cleavable signal sequence. May be part of the export machinery or may also be a substrate for non-classical export. The protein is Non-classical export protein 1 (NCE101) of Saccharomyces cerevisiae (strain ATCC 204508 / S288c) (Baker's yeast).